The chain runs to 345 residues: Uroporphyrinogen decarboxylase (345 aa).

Substrate contacts are provided by residues 26-30 (RQAGR), D76, Y151, S205, and H321.

The protein belongs to the uroporphyrinogen decarboxylase family. As to quaternary structure, homodimer.

The protein resides in the cytoplasm. The catalysed reaction is uroporphyrinogen III + 4 H(+) = coproporphyrinogen III + 4 CO2. Its pathway is porphyrin-containing compound metabolism; protoporphyrin-IX biosynthesis; coproporphyrinogen-III from 5-aminolevulinate: step 4/4. In terms of biological role, catalyzes the decarboxylation of four acetate groups of uroporphyrinogen-III to yield coproporphyrinogen-III. In Phenylobacterium zucineum (strain HLK1), this protein is Uroporphyrinogen decarboxylase.